The chain runs to 312 residues: R2-like ligand binding oxidase (312 aa).

E68, E101, and H104 together coordinate Mn(2+). The 3-(O4'-tyrosyl)-valine (Val-Tyr) cross-link spans 71-162 (VTQDIQPFMA…AAQVRASATY (92 aa)). A Fe cation-binding site is contributed by E101. Fe cation-binding residues include E167, E202, and H205.

Belongs to the ribonucleoside diphosphate reductase small chain family. R2-like ligand binding oxidase subfamily. In terms of assembly, homodimer. It depends on Fe cation as a cofactor. Mn(2+) is required as a cofactor.

In terms of biological role, probable oxidase that might be involved in lipid metabolism. This Mycobacterium sp. (strain JLS) protein is R2-like ligand binding oxidase.